Consider the following 154-residue polypeptide: Lipoprotein signal peptidase (154 aa).

Helical transmembrane passes span 55–75 and 84–104; these read GHMW…IYIM and LFSI…IDRV. Active-site residues include Asp-111 and Asp-129. A helical transmembrane segment spans residues 124-144; it reads IFNVADAALSVGVVLMLVYVF.

It belongs to the peptidase A8 family.

The protein resides in the cell membrane. The enzyme catalyses Release of signal peptides from bacterial membrane prolipoproteins. Hydrolyzes -Xaa-Yaa-Zaa-|-(S,diacylglyceryl)Cys-, in which Xaa is hydrophobic (preferably Leu), and Yaa (Ala or Ser) and Zaa (Gly or Ala) have small, neutral side chains.. It participates in protein modification; lipoprotein biosynthesis (signal peptide cleavage). Functionally, this protein specifically catalyzes the removal of signal peptides from prolipoproteins. The sequence is that of Lipoprotein signal peptidase from Listeria monocytogenes serotype 4b (strain CLIP80459).